A 118-amino-acid chain; its full sequence is Large ribosomal subunit protein bL20 (118 aa).

It belongs to the bacterial ribosomal protein bL20 family.

Its function is as follows. Binds directly to 23S ribosomal RNA and is necessary for the in vitro assembly process of the 50S ribosomal subunit. It is not involved in the protein synthesizing functions of that subunit. The sequence is that of Large ribosomal subunit protein bL20 from Parvibaculum lavamentivorans (strain DS-1 / DSM 13023 / NCIMB 13966).